Reading from the N-terminus, the 370-residue chain is Arginine kinase (370 aa).

The 84-residue stretch at Q6 to N89 folds into the Phosphagen kinase N-terminal domain. Positions Y115–L358 constitute a Phosphagen kinase C-terminal domain. Residues S118 to R122 and H181 each bind ATP. E222 serves as a coordination point for substrate. R226 contributes to the ATP binding site. Substrate is bound at residue C274. Residues R283–H287 and R311–E316 contribute to the ATP site. E316 contributes to the substrate binding site.

This sequence belongs to the ATP:guanido phosphotransferase family. As to quaternary structure, homodimer. Post-translationally, the N-terminus is blocked.

It catalyses the reaction L-arginine + ATP = N(omega)-phospho-L-arginine + ADP + H(+). The protein is Arginine kinase (AK) of Stichopus japonicus (Sea cucumber).